A 416-amino-acid polypeptide reads, in one-letter code: MAFIAALGLLMAGICPAVLCDGILGRDTLPHEDQGKGRQLHSLTLASINTDFTLSLYKKLALRNPDKNVVFSPLSISAALAILSLGAKDSTMEEILEVLKFNLTEITEEEIHQGFGHLLQRLSQPEDQAEINTGSALFIDKEQPILSEFQEKTRALYQAEAFVADFKQCNEAKKFINDYVSNQTQGKIAELFSELDERTSMVLVNYLLFKGKWKVPFNPNDTFESEFYLDEKRSVKVPMMKIKDLTTPYIRDEELSCSVLELKYTGNASALFILPDQGKMQQVESSLQPETLKKWKDSLRPRIISELRMPKFSISTDYNLEEVLPELGIRKIFSQQADLSRITGTKNLHVSQVVHKAVLDVDETGTEGAAATAVTAALKSLPQTIPLLNFNRPFMLVITDNNGQSVFFMGKVTNPM.

The signal sequence occupies residues Met-1 to Cys-20. N-linked (GlcNAc...) asparagine glycans are attached at residues Asn-102, Asn-182, Asn-220, and Asn-267. Residues Gly-365–Arg-392 form an RCL region.

The protein belongs to the serpin family. Post-translationally, N-glycosylated. In terms of tissue distribution, liver and plasma.

It is found in the secreted. Binds to and inhibits kallikreins. Inhibits trypsin but not chymotrypsin or elastase. The sequence is that of Serine protease inhibitor A3K (Serpina3k) from Rattus norvegicus (Rat).